The chain runs to 638 residues: ATP-dependent zinc metalloprotease FtsH (638 aa).

At 1–4 the chain is on the cytoplasmic side; that stretch reads MNNQ. The helical transmembrane segment at 5-25 threads the bilayer; the sequence is GKNIIVWAVIFVFVILLFNVF. At 26–103 the chain is on the periplasmic side; the sequence is QSDGLLSSKN…VVPPETRMNT (78 aa). The chain crosses the membrane as a helical span at residues 104–124; the sequence is FLSFLISWFPMLLLIGVWVFF. The Cytoplasmic segment spans residues 125–638; that stretch reads MRQMHGGGKA…PIKAKKEDKS (514 aa). 195-202 is an ATP binding site; that stretch reads GPPGTGKT. H417 is a binding site for Zn(2+). The active site involves E418. Zn(2+) is bound by residues H421 and D495. The segment at 523–544 is disordered; sequence SASEDMYTNRNSSSDRSESTSE.

In the central section; belongs to the AAA ATPase family. It in the C-terminal section; belongs to the peptidase M41 family. Homohexamer. Zn(2+) is required as a cofactor.

It localises to the cell inner membrane. Acts as a processive, ATP-dependent zinc metallopeptidase for both cytoplasmic and membrane proteins. Plays a role in the quality control of integral membrane proteins. This chain is ATP-dependent zinc metalloprotease FtsH, found in Rickettsia bellii (strain RML369-C).